Reading from the N-terminus, the 511-residue chain is Coatomer subunit delta (511 aa).

Residues 168–177 (QARRDAERQG) are compositionally biased toward basic and acidic residues. The interval 168–188 (QARRDAERQGKKAPGFGGFGS) is disordered. Phosphoserine is present on serine 223. An N6-acetyllysine mark is found at lysine 233 and lysine 241. Serine 244 carries the post-translational modification Phosphoserine. In terms of domain architecture, MHD spans 271–511 (MESVHMKIEE…TFLVDKYEIL (241 aa)). An N6-acetyllysine mark is found at lysine 309 and lysine 351. Serine 493 carries the post-translational modification Phosphoserine.

This sequence belongs to the adaptor complexes medium subunit family. Delta-COP subfamily. In terms of assembly, oligomeric complex that consists of at least the alpha, beta, beta', gamma, delta, epsilon and zeta subunits. In terms of tissue distribution, ubiquitously expressed.

It localises to the cytoplasm. It is found in the golgi apparatus membrane. The protein resides in the cytoplasmic vesicle. Its subcellular location is the COPI-coated vesicle membrane. Component of the coatomer, a cytosolic protein complex that binds to dilysine motifs and reversibly associates with Golgi non-clathrin-coated vesicles, which further mediate biosynthetic protein transport from the ER, via the Golgi up to the trans Golgi network. The coatomer complex is required for budding from Golgi membranes, and is essential for the retrograde Golgi-to-ER transport of dilysine-tagged proteins. In mammals, the coatomer can only be recruited by membranes associated to ADP-ribosylation factors (ARFs), which are small GTP-binding proteins; the complex also influences the Golgi structural integrity, as well as the processing, activity, and endocytic recycling of LDL receptors. In Homo sapiens (Human), this protein is Coatomer subunit delta (ARCN1).